The chain runs to 305 residues: UDP-3-O-acyl-N-acetylglucosamine deacetylase (305 aa).

Residues histidine 79, histidine 238, and aspartate 242 each contribute to the Zn(2+) site. The active-site Proton donor is histidine 265.

Belongs to the LpxC family. Requires Zn(2+) as cofactor.

It catalyses the reaction a UDP-3-O-[(3R)-3-hydroxyacyl]-N-acetyl-alpha-D-glucosamine + H2O = a UDP-3-O-[(3R)-3-hydroxyacyl]-alpha-D-glucosamine + acetate. It participates in glycolipid biosynthesis; lipid IV(A) biosynthesis; lipid IV(A) from (3R)-3-hydroxytetradecanoyl-[acyl-carrier-protein] and UDP-N-acetyl-alpha-D-glucosamine: step 2/6. Catalyzes the hydrolysis of UDP-3-O-myristoyl-N-acetylglucosamine to form UDP-3-O-myristoylglucosamine and acetate, the committed step in lipid A biosynthesis. The polypeptide is UDP-3-O-acyl-N-acetylglucosamine deacetylase (Salmonella typhi).